Here is a 115-residue protein sequence, read N- to C-terminus: MAENITSAKATAKMVRVSARKVRLVLDAIRGKSVAEAFAILKFTPRGAASDVEKVLKSAVANAENNFDLDRASLVVSEAFANEGPTLKRFRPRAKGSASPINKRTSHITVVVTER.

Belongs to the universal ribosomal protein uL22 family. Part of the 50S ribosomal subunit.

This protein binds specifically to 23S rRNA; its binding is stimulated by other ribosomal proteins, e.g. L4, L17, and L20. It is important during the early stages of 50S assembly. It makes multiple contacts with different domains of the 23S rRNA in the assembled 50S subunit and ribosome. In terms of biological role, the globular domain of the protein is located near the polypeptide exit tunnel on the outside of the subunit, while an extended beta-hairpin is found that lines the wall of the exit tunnel in the center of the 70S ribosome. This is Large ribosomal subunit protein uL22 from Limosilactobacillus reuteri subsp. reuteri (strain JCM 1112) (Lactobacillus reuteri).